We begin with the raw amino-acid sequence, 158 residues long: S-ribosylhomocysteine lyase (158 aa).

Fe cation is bound by residues His55, His59, and Cys127.

The protein belongs to the LuxS family. In terms of assembly, homodimer. The cofactor is Fe cation.

It catalyses the reaction S-(5-deoxy-D-ribos-5-yl)-L-homocysteine = (S)-4,5-dihydroxypentane-2,3-dione + L-homocysteine. Its function is as follows. Involved in the synthesis of autoinducer 2 (AI-2) which is secreted by bacteria and is used to communicate both the cell density and the metabolic potential of the environment. The regulation of gene expression in response to changes in cell density is called quorum sensing. Catalyzes the transformation of S-ribosylhomocysteine (RHC) to homocysteine (HC) and 4,5-dihydroxy-2,3-pentadione (DPD). The polypeptide is S-ribosylhomocysteine lyase (Geobacillus thermodenitrificans (strain NG80-2)).